We begin with the raw amino-acid sequence, 185 residues long: Large ribosomal subunit protein uL5 (185 aa).

This sequence belongs to the universal ribosomal protein uL5 family. Part of the 50S ribosomal subunit; part of the 5S rRNA/L5/L18/L25 subcomplex. Contacts the 5S rRNA and the P site tRNA. Forms a bridge to the 30S subunit in the 70S ribosome.

Functionally, this is one of the proteins that bind and probably mediate the attachment of the 5S RNA into the large ribosomal subunit, where it forms part of the central protuberance. In the 70S ribosome it contacts protein S13 of the 30S subunit (bridge B1b), connecting the 2 subunits; this bridge is implicated in subunit movement. Contacts the P site tRNA; the 5S rRNA and some of its associated proteins might help stabilize positioning of ribosome-bound tRNAs. The chain is Large ribosomal subunit protein uL5 from Bartonella bacilliformis (strain ATCC 35685 / KC583 / Herrer 020/F12,63).